Reading from the N-terminus, the 704-residue chain is Elongation factor G (704 aa).

The tr-type G domain occupies 8 to 290 (ARYRNIGISA…AVIDYLPSPV (283 aa)). Residues 17 to 24 (AHIDAGKT), 88 to 92 (DTPGH), and 142 to 145 (NKMD) each bind GTP. Residues lysine 504 and lysine 643 each carry the N6-acetyllysine modification.

Belongs to the TRAFAC class translation factor GTPase superfamily. Classic translation factor GTPase family. EF-G/EF-2 subfamily.

The protein localises to the cytoplasm. Catalyzes the GTP-dependent ribosomal translocation step during translation elongation. During this step, the ribosome changes from the pre-translocational (PRE) to the post-translocational (POST) state as the newly formed A-site-bound peptidyl-tRNA and P-site-bound deacylated tRNA move to the P and E sites, respectively. Catalyzes the coordinated movement of the two tRNA molecules, the mRNA and conformational changes in the ribosome. This is Elongation factor G from Shigella flexneri.